Here is a 780-residue protein sequence, read N- to C-terminus: E3 SUMO-protein ligase gei-17 (780 aa).

The tract at residues 181–210 (APLHSSFPNHGRSSQQSLQKSEKSNRPKKM) is disordered. In terms of domain architecture, PINIT spans 203–367 (KSNRPKKMYA…AAGVYFVHRV (165 aa)). An SP-RING-type zinc finger spans residues 400–485 (GEDDIAMDRL…LAKVDKNTTE (86 aa)). Positions 431, 433, 454, and 457 each coordinate Zn(2+). Over residues 519–530 (GTASCSSTNGNG) the composition is skewed to polar residues. 3 disordered regions span residues 519 to 544 (GTASCSSTNGNGLANEAAKKKPADDD), 560 to 594 (IMNSLNDSFSPGRHTASAELAAQKTPPQQKKKTKD), and 732 to 755 (QQHHLQQQQQQQQSPQIMSPSFYA). Residues 732–749 (QQHHLQQQQQQQQSPQIM) are compositionally biased toward low complexity.

This sequence belongs to the PIAS family. In terms of assembly, may interact with gex-3.

It participates in protein modification; protein sumoylation. Functions as an E3-type smo-1 ligase. Mediates smo-1 conjugation to air-2 in vitro and is required for proper chromosome alignment. In the early embryo, specifically suppresses checkpoint activation in response to DNA damage, maybe by promoting mus-101 sumoylation. In embryos, plays a role in determining telomere localization in the nucleus. Acts with pie-1 to promote piRNA-mediated silencing and fertility in the adult germline. This is E3 SUMO-protein ligase gei-17 from Caenorhabditis elegans.